A 278-amino-acid polypeptide reads, in one-letter code: Digeranylgeranylglyceryl phosphate synthase (278 aa).

Helical transmembrane passes span 12–32, 34–54, 91–111, 142–162, 204–224, 226–246, and 257–277; these read LKNC…ASYF, ISMI…CGFG, LLVV…LMAV, VFIF…LFLC, FLLV…FFGI, YLIS…NLVM, and SRNI…GSLF.

This sequence belongs to the UbiA prenyltransferase family. DGGGP synthase subfamily. Requires Mg(2+) as cofactor.

The protein resides in the cell membrane. It catalyses the reaction sn-3-O-(geranylgeranyl)glycerol 1-phosphate + (2E,6E,10E)-geranylgeranyl diphosphate = 2,3-bis-O-(geranylgeranyl)-sn-glycerol 1-phosphate + diphosphate. It functions in the pathway membrane lipid metabolism; glycerophospholipid metabolism. Its function is as follows. Prenyltransferase that catalyzes the transfer of the geranylgeranyl moiety of geranylgeranyl diphosphate (GGPP) to the C2 hydroxyl of (S)-3-O-geranylgeranylglyceryl phosphate (GGGP). This reaction is the second ether-bond-formation step in the biosynthesis of archaeal membrane lipids. The polypeptide is Digeranylgeranylglyceryl phosphate synthase (Methanococcus maripaludis (strain C6 / ATCC BAA-1332)).